The sequence spans 405 residues: Eukaryotic initiation factor 4A (405 aa).

Positions 32 to 60 (PTFESMGLREELLRGIFNYGFEKPSAIQQ) match the Q motif motif. The 171-residue stretch at 63-233 (ILPIIKGRDT…EKFMTKPVRI (171 aa)) folds into the Helicase ATP-binding domain. 76–83 (AQSGTGKT) lines the ATP pocket. A DEAD box motif is present at residues 181–184 (DEAD). The region spanning 244–405 (GIKQFFVSVE…EMPVNFASII (162 aa)) is the Helicase C-terminal domain.

It belongs to the DEAD box helicase family. eIF4A subfamily.

The protein localises to the cytoplasm. It catalyses the reaction ATP + H2O = ADP + phosphate + H(+). In terms of biological role, ATP-dependent RNA helicase which is a subunit of the eIF4F complex involved in cap recognition and is required for mRNA binding to ribosome. In the current model of translation initiation, eIF4A unwinds RNA secondary structures in the 5'-UTR of mRNAs which is necessary to allow efficient binding of the small ribosomal subunit, and subsequent scanning for the initiator codon. This Dictyostelium discoideum (Social amoeba) protein is Eukaryotic initiation factor 4A (tifA).